The sequence spans 109 residues: Cell division protein ZapA (109 aa).

The stretch at 71-99 (KTRDYASNMEQRIRMLQQTIEQALLEQGR) forms a coiled coil.

The protein belongs to the ZapA family. Type 1 subfamily. In terms of assembly, homodimer. Interacts with FtsZ.

Its subcellular location is the cytoplasm. Its function is as follows. Activator of cell division through the inhibition of FtsZ GTPase activity, therefore promoting FtsZ assembly into bundles of protofilaments necessary for the formation of the division Z ring. It is recruited early at mid-cell but it is not essential for cell division. This chain is Cell division protein ZapA, found in Serratia proteamaculans (strain 568).